The sequence spans 513 residues: ATP synthase subunit alpha (513 aa).

169-176 (GDRQTGKT) is a binding site for ATP.

It belongs to the ATPase alpha/beta chains family. F-type ATPases have 2 components, CF(1) - the catalytic core - and CF(0) - the membrane proton channel. CF(1) has five subunits: alpha(3), beta(3), gamma(1), delta(1), epsilon(1). CF(0) has three main subunits: a(1), b(2) and c(9-12). The alpha and beta chains form an alternating ring which encloses part of the gamma chain. CF(1) is attached to CF(0) by a central stalk formed by the gamma and epsilon chains, while a peripheral stalk is formed by the delta and b chains.

It is found in the cell inner membrane. The catalysed reaction is ATP + H2O + 4 H(+)(in) = ADP + phosphate + 5 H(+)(out). Its function is as follows. Produces ATP from ADP in the presence of a proton gradient across the membrane. The alpha chain is a regulatory subunit. The polypeptide is ATP synthase subunit alpha (Cupriavidus necator (strain ATCC 17699 / DSM 428 / KCTC 22496 / NCIMB 10442 / H16 / Stanier 337) (Ralstonia eutropha)).